A 278-amino-acid chain; its full sequence is Transcription initiation factor TFIID subunit 9 (278 aa).

The segment at Thr-193 to Asn-278 is disordered. Residues Ser-200–Gln-210 show a composition bias toward gly residues. Residues Ala-231 to Ala-240 show a composition bias toward low complexity. The segment covering Ser-241–Gly-259 has biased composition (gly residues). Acidic residues predominate over residues Glu-269–Asn-278.

Belongs to the TAF9 family. Belongs to the TFIID complex which is composed of TATA binding protein (Tbp) and a number of TBP-associated factors (TAFs). Taf9 and Taf6 exist as a heterotetramer. Interacts with e(y)2.

It localises to the nucleus. TFIID is a multimeric protein complex that plays a central role in mediating promoter responses to various activators and repressors. This Drosophila melanogaster (Fruit fly) protein is Transcription initiation factor TFIID subunit 9.